A 98-amino-acid polypeptide reads, in one-letter code: MLKMNNLTLEKKAQTRNLRKTLQGIVIRTSPKTIMVEVETAYKHKLYAKRFKKRKKFNTHDEKNLAEVGDFVKIAECRPISKTKHFRLVEVLQKKGEI.

It belongs to the universal ribosomal protein uS17 family. Part of the 30S ribosomal subunit.

One of the primary rRNA binding proteins, it binds specifically to the 5'-end of 16S ribosomal RNA. In Mesomycoplasma hyopneumoniae (strain 232) (Mycoplasma hyopneumoniae), this protein is Small ribosomal subunit protein uS17.